A 496-amino-acid polypeptide reads, in one-letter code: Cytochrome P450 monooxygenase claT (496 aa).

A helical transmembrane segment spans residues 2 to 22 (LSLIVEATLLLVVLVLSAHYV). A heme-binding site is contributed by Cys423.

This sequence belongs to the cytochrome P450 family. Heme serves as cofactor.

It localises to the membrane. It carries out the reaction wigandol + 4 reduced [NADPH--hemoprotein reductase] + 4 O2 = arnebinol A + 4 oxidized [NADPH--hemoprotein reductase] + 6 H2O + 4 H(+). It catalyses the reaction arnebinol A + reduced [NADPH--hemoprotein reductase] + O2 = clavilactone A + oxidized [NADPH--hemoprotein reductase] + H2O + H(+). The enzyme catalyses (2E)-geranylhydroquinone + reduced [NADPH--hemoprotein reductase] + O2 = isoalliodorol + oxidized [NADPH--hemoprotein reductase] + H2O + H(+). Its pathway is secondary metabolite biosynthesis; terpenoid biosynthesis. In terms of biological role, cytochrome P450 monooxygenase; part of the gene cluster that mediates the biosynthesis of clavilactone A, a meroterpenoid that features a unique benzo-fused ten-membered carbocyclic ring unit with an alpha,beta-epoxy-gamma-lactone moiety, forming an intriguing 10/5/3 tricyclic nested skeleton. ClaR, ClaS and ClaT are sufficient to produce clavilactone A. Within the pathway, claT acts as a multifunctional cytochrome P450 monooxygenase that catalyzes a ten-electron oxidation to accomplish the biosynthesis of the 10/5/3 tricyclic nested skeleton in clavilactones. The biosynthesis begins with the prenyltransferase claS that transfers geranyl pyrophosphate (GPP) to hydroquinone to produces geranylhydroquinone. The cytochrome P450 monooxygenase claR then catalyzes the diradical coupling reaction between the intramolecular hydroquinone and allyl moieties to form the benzo-fused ten-membered carbocyclic ring unit of wigantol. Finally the cytochrome P450 monooxygenase claT exquisitely and stereoselectively assembles the alpha,beta-epoxy-gamma-lactone moiety, producing clavilactone A via arnebinol A. The protein is Cytochrome P450 monooxygenase claT of Ampulloclitocybe clavipes (Club foot).